A 230-amino-acid chain; its full sequence is MSERAPVVTIDGPSGAGKGTISQLLAQHLGWQLLDSGAIYRVLALAAIHHNVELENEESITLLAAHLDVKFLTGNDTDPVQVILEGEDVTTDIRTQECSNAASKVAAFPRVREALLRRQRAFKTAPGLIADGRDMGTVVFPSAPAKLYLTASAEERAQRRYNQLQDKGFDVNIERLLSEIIERDDRDMNRPVAPLVPAEDALIIDTSGKGIDEVLALALNFINQKLSDTN.

12–20 (GPSGAGKGT) provides a ligand contact to ATP.

Belongs to the cytidylate kinase family. Type 1 subfamily.

It is found in the cytoplasm. It carries out the reaction CMP + ATP = CDP + ADP. The catalysed reaction is dCMP + ATP = dCDP + ADP. This Shewanella baltica (strain OS223) protein is Cytidylate kinase.